The following is a 205-amino-acid chain: Ribosomal RNA small subunit methyltransferase G (205 aa).

Residues glycine 66, phenylalanine 71, 119–120, and arginine 135 each bind S-adenosyl-L-methionine; that span reads IE.

It belongs to the methyltransferase superfamily. RNA methyltransferase RsmG family.

It is found in the cytoplasm. The enzyme catalyses guanosine(527) in 16S rRNA + S-adenosyl-L-methionine = N(7)-methylguanosine(527) in 16S rRNA + S-adenosyl-L-homocysteine. Specifically methylates the N7 position of guanine in position 527 of 16S rRNA. The protein is Ribosomal RNA small subunit methyltransferase G of Rhizobium leguminosarum bv. trifolii (strain WSM2304).